The primary structure comprises 256 residues: Uridylate kinase (256 aa).

Residue 10 to 13 participates in ATP binding; that stretch reads KLSG. Gly52 provides a ligand contact to UMP. ATP is bound by residues Gly53 and Arg57. UMP is bound by residues Asp72 and 134-141; that span reads NGQPFLTT. Residues Tyr168 and Asp171 each coordinate ATP.

The protein belongs to the UMP kinase family. In terms of assembly, homohexamer.

Its subcellular location is the cytoplasm. The catalysed reaction is UMP + ATP = UDP + ADP. The protein operates within pyrimidine metabolism; CTP biosynthesis via de novo pathway; UDP from UMP (UMPK route): step 1/1. Its activity is regulated as follows. Inhibited by UTP. Its function is as follows. Catalyzes the reversible phosphorylation of UMP to UDP. This Frankia alni (strain DSM 45986 / CECT 9034 / ACN14a) protein is Uridylate kinase.